The following is a 291-amino-acid chain: MSEKLQKVLARAGHGSRREIESIIEAGRVSVDGKIATLGDRVEVTPGLKIRIDGHLISVKESAEQICRVLAYYKPEGELCTRNDPEGRPTVFDRLPKLRGARWIAVGRLDVNTCGLLLFTTDGELANRLMHPSREVEREYAVRVFGQVDESKLRDLSRGVQLEDGPAAFKTIKFSGGEGINQWYNVTLTEGRNREVRRLWEAVGVQVSRLIRVRYGDIPLPKGLPRGGWTELDLAQTNYLRGLVELPPETSSKVAVEKDRRRMKANQIRRAVKRHSQIAGGRRSGGRNNNG.

The region spanning 3–63 (EKLQKVLARA…GHLISVKESA (61 aa)) is the S4 RNA-binding domain. Asp110 serves as the catalytic Nucleophile.

This sequence belongs to the pseudouridine synthase RsuA family.

It catalyses the reaction uridine(2605) in 23S rRNA = pseudouridine(2605) in 23S rRNA. In terms of biological role, responsible for synthesis of pseudouridine from uracil-2605 in 23S ribosomal RNA. The protein is Ribosomal large subunit pseudouridine synthase B (rluB) of Salmonella typhimurium (strain LT2 / SGSC1412 / ATCC 700720).